The following is a 304-amino-acid chain: Ribonuclease Z (304 aa).

Residues His-64, His-66, Asp-68, His-69, His-141, Asp-209, and His-267 each contribute to the Zn(2+) site. The Proton acceptor role is filled by Asp-68.

It belongs to the RNase Z family. In terms of assembly, homodimer. It depends on Zn(2+) as a cofactor.

It catalyses the reaction Endonucleolytic cleavage of RNA, removing extra 3' nucleotides from tRNA precursor, generating 3' termini of tRNAs. A 3'-hydroxy group is left at the tRNA terminus and a 5'-phosphoryl group is left at the trailer molecule.. Functionally, zinc phosphodiesterase, which displays some tRNA 3'-processing endonuclease activity. Probably involved in tRNA maturation, by removing a 3'-trailer from precursor tRNA. This is Ribonuclease Z from Thermoplasma volcanium (strain ATCC 51530 / DSM 4299 / JCM 9571 / NBRC 15438 / GSS1).